Reading from the N-terminus, the 117-residue chain is Putative hydrolase fragment YghX (117 aa).

A disordered region spans residues 91-117; it reads DGLSSVGGYPGNDDKGRELQQQVDPTN.

In Escherichia coli (strain K12), this protein is Putative hydrolase fragment YghX (yghX).